We begin with the raw amino-acid sequence, 795 residues long: Phenylalanine--tRNA ligase beta subunit (795 aa).

One can recognise a tRNA-binding domain in the interval 39–149; that stretch reads SGEFSGVVVA…ADAPIGVDIR (111 aa). In terms of domain architecture, B5 spans 402–477; sequence PKQPIIRLRR…RIYGYNRIPN (76 aa). The Mg(2+) site is built by D455, D461, E464, and E465. The region spanning 701–794 is the FDX-ACB domain; sequence SKFPANNRDI…LAQRFQASLR (94 aa).

Belongs to the phenylalanyl-tRNA synthetase beta subunit family. Type 1 subfamily. In terms of assembly, tetramer of two alpha and two beta subunits. Mg(2+) is required as a cofactor.

Its subcellular location is the cytoplasm. It carries out the reaction tRNA(Phe) + L-phenylalanine + ATP = L-phenylalanyl-tRNA(Phe) + AMP + diphosphate + H(+). In Haemophilus ducreyi (strain 35000HP / ATCC 700724), this protein is Phenylalanine--tRNA ligase beta subunit.